Here is a 283-residue protein sequence, read N- to C-terminus: Tyrosine recombinase THA_404 (283 aa).

The Core-binding (CB) domain maps to 1-86 (MDKVIEMFSD…SLNSFFNYLE (86 aa)). Positions 107-281 (KIPDFLTEDE…ADQEKFDAVK (175 aa)) constitute a Tyr recombinase domain. Active-site residues include R145, K170, H233, R236, and H259. Catalysis depends on Y268, which acts as the O-(3'-phospho-DNA)-tyrosine intermediate.

It belongs to the 'phage' integrase family.

The protein resides in the cytoplasm. Functionally, site-specific tyrosine recombinase, which acts by catalyzing the cutting and rejoining of the recombining DNA molecules. In Thermosipho africanus (strain TCF52B), this protein is Tyrosine recombinase THA_404.